The sequence spans 64 residues: Large ribosomal subunit protein bL35 (64 aa).

Residues 1-42 (MPKAKTHSGASKRFRRTGTGKIVRQKANRRHLLEHKPTKRTR) show a composition bias toward basic residues. The interval 1-64 (MPKAKTHSGA…NSRINKLLNG (64 aa)) is disordered. Residues 48–58 (TTVSAADNSRI) show a composition bias toward polar residues.

Belongs to the bacterial ribosomal protein bL35 family.

This Mycolicibacterium smegmatis (strain ATCC 700084 / mc(2)155) (Mycobacterium smegmatis) protein is Large ribosomal subunit protein bL35.